A 210-amino-acid polypeptide reads, in one-letter code: MADS-box protein AGL42 (210 aa).

Residues 1–61 (MVRGKIEMKK…GRLYEFSSSD (61 aa)) enclose the MADS-box domain. Positions 87-177 (LQQLKQEASH…HQKNVINPWR (91 aa)) constitute a K-box domain.

As to expression, expressed in quiescent center (QC) cells of root tips. Expressed at the base of the petiole of cotyledons and leaves, in flower buds, petals, sepals and abscission zone of flowers and siliques.

The protein localises to the nucleus. In terms of biological role, MADS-box transcription factor that acts with AGL71 and AGL72 in the control of flowering time. Promotes flowering at the shoot apical and axillary meristems. Seems to act through a gibberellin-dependent pathway. Interacts genetically with SOC1 and its expression is directly regulated by SOC1. Plays a role in controlling flower organ senescence and abscission by repressing ethylene responses and regulating the expression of BOP2 and IDA. This Arabidopsis thaliana (Mouse-ear cress) protein is MADS-box protein AGL42 (AGL42).